We begin with the raw amino-acid sequence, 89 residues long: Putative membrane protein insertion efficiency factor (89 aa).

This sequence belongs to the UPF0161 family.

The protein localises to the cell membrane. In terms of biological role, could be involved in insertion of integral membrane proteins into the membrane. The chain is Putative membrane protein insertion efficiency factor from Exiguobacterium sp. (strain ATCC BAA-1283 / AT1b).